A 777-amino-acid polypeptide reads, in one-letter code: Glucocorticoid receptor (777 aa).

Basic and acidic residues predominate over residues 1–14 (MDSKESLTPGKEEN). Positions 1–22 (MDSKESLTPGKEENPSSVLTQE) are disordered. The modulating stretch occupies residues 1–420 (MDSKESLTPG…TATTGPPPKL (420 aa)). Thr8 is subject to Phosphothreonine. Omega-N-methylarginine is present on Arg23. A phosphoserine mark is found at Ser45, Ser113, Ser134, and Ser141. Residues 130–183 (NRSTSVPENPKSSASSSVSAAPKEKEFPKTHSDVSSEQQNLKGQTGTNGGNAKL) are disordered. The span at 134-150 (SVPENPKSSASSSVSAA) shows a compositional bias: low complexity. Residues 151–163 (PKEKEFPKTHSDV) are compositionally biased toward basic and acidic residues. Polar residues predominate over residues 164-174 (SSEQQNLKGQT). 3 positions are modified to phosphoserine: Ser203, Ser211, and Ser226. Residue Lys258 forms a Glycyl lysine isopeptide (Lys-Gly) (interchain with G-Cter in SUMO2) linkage. Position 267 is a phosphoserine (Ser267). Glycyl lysine isopeptide (Lys-Gly) (interchain with G-Cter in SUMO); alternate cross-links involve residues Lys277 and Lys293. Glycyl lysine isopeptide (Lys-Gly) (interchain with G-Cter in SUMO2); alternate cross-links involve residues Lys277 and Lys293. Residues 394-414 (SSPSMRPDVSSPPSSSSTATT) show a composition bias toward low complexity. Residues 394-415 (SSPSMRPDVSSPPSSSSTATTG) are disordered. The residue at position 404 (Ser404) is a Phosphoserine. A Glycyl lysine isopeptide (Lys-Gly) (interchain with G-Cter in ubiquitin) cross-link involves residue Lys419. NR C4-type zinc fingers lie at residues 421–441 (CLVC…CGSC) and 457–481 (CAGR…YRKC). A DNA-binding region (nuclear receptor) is located at residues 421–486 (CLVCSDEASG…RYRKCLQAGM (66 aa)). N6-acetyllysine occurs at positions 480, 492, 494, and 495. Positions 485 to 777 (GMNLEARKTK…NIRKLLFHQK (293 aa)) are interaction with CLOCK. A hinge region spans residues 487-523 (NLEARKTKKKIKGIQQATTGVSQETSENPANKTIVPA). The region spanning 524–758 (TLPQLTPTLV…FPEMLAEIIT (235 aa)) is the NR LBD domain. The segment at 532–697 (LVSLLEVIEP…EIRMTYIKEL (166 aa)) is interaction with CRY1. Lys703 participates in a covalent cross-link: Glycyl lysine isopeptide (Lys-Gly) (interchain with G-Cter in SUMO).

Belongs to the nuclear hormone receptor family. NR3 subfamily. As to quaternary structure, heteromultimeric cytoplasmic complex with HSP90AA1, HSPA1A/HSPA1B, and FKBP5 or another immunophilin such as PPID, STIP1, or the immunophilin homolog PPP5C. Upon ligand binding FKBP5 dissociates from the complex and FKBP4 takes its place, thereby linking the complex to dynein and mediating transport to the nucleus, where the complex dissociates. Probably forms a complex composed of chaperones HSP90 and HSP70, co-chaperones CDC37, PPP5C, TSC1 and client protein TSC2, CDK4, AKT, RAF1 and NR3C1; this complex does not contain co-chaperones STIP1/HOP and PTGES3/p23. Directly interacts with UNC45A. Binds to DNA as a homodimer, and as heterodimer with NR3C2 or the retinoid X receptor. Binds STAT5A and STAT5B homodimers and heterodimers. Interacts with NRIP1, POU2F1, POU2F2 and TRIM28. Interacts with several coactivator complexes, including the SMARCA4 complex, CREBBP/EP300, TADA2L (Ada complex) and p160 coactivators such as NCOA2 and NCOA6. Interaction with BAG1 inhibits transactivation. Interacts with HEXIM1 and TGFB1I1. Interacts with NCOA1. Interacts with NCOA3, SMARCA4, SMARCC1, SMARCD1, and SMARCE1. Interacts with CLOCK, CRY1 and CRY2 in a ligand-dependent fashion. Interacts with CIART. Interacts with RWDD3. Interacts with UBE2I/UBC9 and this interaction is enhanced in the presence of RWDD3. Interacts with GRIP1. Interacts with NR4A3 (via nuclear receptor DNA-binding domain), represses transcription activity of NR4A3 on the POMC promoter Nur response element (NurRE). Directly interacts with PNRC2 to attract and form a complex with UPF1 and DCP1A; the interaction leads to rapid mRNA degradation. Interacts with GSK3B. Interacts with FNIP1 and FNIP2. Interacts (via C-terminus) with HNRNPU (via C-terminus). Interacts with MCM3AP. Interacts (via domain NR LBD) with HSP90AA1 and HSP90AB1. In the absence of hormonal ligand, interacts with TACC1. Interacts (via NR LBD domain) with ZNF764 (via KRAB domain); the interaction regulates transcription factor activity of NR3C1 by directing its actions toward certain biologic pathways. Acetylation by CLOCK reduces its binding to glucocorticoid response elements and its transcriptional activity. Post-translationally, increased proteasome-mediated degradation in response to glucocorticoids. In terms of processing, phosphorylated in the absence of hormone; becomes hyperphosphorylated in the presence of glucocorticoid. The Ser-203, Ser-226 and Ser-404-phosphorylated forms are mainly cytoplasmic, and the Ser-211-phosphorylated form is nuclear. Phosphorylation at Ser-211 increases transcriptional activity. Phosphorylation at Ser-203, Ser-226 and Ser-404 decreases signaling capacity. Phosphorylation at Ser-404 may protect from glucocorticoid-induced apoptosis. Phosphorylation at Ser-203 and Ser-211 is not required in regulation of chromosome segregation. May be dephosphorylated by PPP5C, attenuates NR3C1 action. Ubiquitinated by UBR5, leading to its degradation: UBR5 specifically recognizes and binds ligand-bound NR3C1 when it is not associated with coactivators (NCOAs). In presence of NCOAs, the UBR5-degron is not accessible, preventing its ubiquitination and degradation. Post-translationally, sumoylation at Lys-277 and Lys-293 negatively regulates its transcriptional activity. Sumoylation at Lys-703 positively regulates its transcriptional activity in the presence of RWDD3. Sumoylation at Lys-277 and Lys-293 is dispensable whereas sumoylation at Lys-703 is critical for the stimulatory effect of RWDD3 on its transcriptional activity. Heat shock increases sumoylation in a RWDD3-dependent manner.

Its subcellular location is the cytoplasm. The protein resides in the nucleus. It is found in the mitochondrion. The protein localises to the cytoskeleton. It localises to the spindle. Its subcellular location is the microtubule organizing center. The protein resides in the centrosome. It is found in the chromosome. The protein localises to the nucleoplasm. Functionally, receptor for glucocorticoids (GC). Has a dual mode of action: as a transcription factor that binds to glucocorticoid response elements (GRE), both for nuclear and mitochondrial DNA, and as a modulator of other transcription factors. Affects inflammatory responses, cellular proliferation and differentiation in target tissues. Involved in chromatin remodeling. Plays a role in rapid mRNA degradation by binding to the 5' UTR of target mRNAs and interacting with PNRC2 in a ligand-dependent manner which recruits the RNA helicase UPF1 and the mRNA-decapping enzyme DCP1A, leading to RNA decay. Could act as a coactivator for STAT5-dependent transcription upon growth hormone (GH) stimulation and could reveal an essential role of hepatic GR in the control of body growth. Mediates glucocorticoid-induced apoptosis. Promotes accurate chromosome segregation during mitosis. May act as a tumor suppressor. May play a negative role in adipogenesis through the regulation of lipolytic and antilipogenic gene expression. The polypeptide is Glucocorticoid receptor (NR3C1) (Saguinus oedipus (Cotton-top tamarin)).